The following is a 283-amino-acid chain: Bifunctional protein FolD (283 aa).

NADP(+) contacts are provided by residues 165 to 167 and Ser-190; that span reads GRS.

Belongs to the tetrahydrofolate dehydrogenase/cyclohydrolase family. In terms of assembly, homodimer.

The catalysed reaction is (6R)-5,10-methylene-5,6,7,8-tetrahydrofolate + NADP(+) = (6R)-5,10-methenyltetrahydrofolate + NADPH. The enzyme catalyses (6R)-5,10-methenyltetrahydrofolate + H2O = (6R)-10-formyltetrahydrofolate + H(+). Its pathway is one-carbon metabolism; tetrahydrofolate interconversion. Functionally, catalyzes the oxidation of 5,10-methylenetetrahydrofolate to 5,10-methenyltetrahydrofolate and then the hydrolysis of 5,10-methenyltetrahydrofolate to 10-formyltetrahydrofolate. This is Bifunctional protein FolD from Variovorax paradoxus (strain S110).